Consider the following 315-residue polypeptide: Probable phosphate transport system permease protein PstC (315 aa).

Transmembrane regions (helical) follow at residues 18 to 38 (IITL…LGFY), 80 to 100 (IYTA…YAIF), 119 to 139 (IMAG…LVPL), 167 to 187 (CYLS…AAII), 227 to 247 (GLIL…LVIG), and 283 to 303 (VLYS…IIGI). Residues 76-302 (IWGSIYTATI…VIGLVVNIIG (227 aa)) form the ABC transmembrane type-1 domain.

It belongs to the binding-protein-dependent transport system permease family. CysTW subfamily.

The protein localises to the cell membrane. Its function is as follows. Part of the binding-protein-dependent transport system for phosphate; probably responsible for the translocation of the substrate across the membrane. The chain is Probable phosphate transport system permease protein PstC (pstC) from Methanocaldococcus jannaschii (strain ATCC 43067 / DSM 2661 / JAL-1 / JCM 10045 / NBRC 100440) (Methanococcus jannaschii).